Consider the following 219-residue polypeptide: 7-carboxy-7-deazaguanine synthase (219 aa).

Residues 22–24 and R37 contribute to the substrate site; that span reads IQG. One can recognise a Radical SAM core domain in the interval 28–219; that stretch reads LVGLPSVFIR…PQVHKCFDLK (192 aa). 3 residues coordinate [4Fe-4S] cluster: C41, C45, and C48. T81 contacts substrate. Residues G83 and 130–132 each bind S-adenosyl-L-methionine; that span reads SPK.

The protein belongs to the radical SAM superfamily. 7-carboxy-7-deazaguanine synthase family. As to quaternary structure, homodimer. It depends on [4Fe-4S] cluster as a cofactor. S-adenosyl-L-methionine is required as a cofactor. The cofactor is Mg(2+).

It carries out the reaction 6-carboxy-5,6,7,8-tetrahydropterin + H(+) = 7-carboxy-7-deazaguanine + NH4(+). It participates in purine metabolism; 7-cyano-7-deazaguanine biosynthesis. Functionally, catalyzes the complex heterocyclic radical-mediated conversion of 6-carboxy-5,6,7,8-tetrahydropterin (CPH4) to 7-carboxy-7-deazaguanine (CDG), a step common to the biosynthetic pathways of all 7-deazapurine-containing compounds. The polypeptide is 7-carboxy-7-deazaguanine synthase (Aquifex aeolicus (strain VF5)).